The primary structure comprises 428 residues: Adenylosuccinate synthetase (428 aa).

GTP is bound by residues 11 to 17 (GDEGKGK) and 39 to 41 (GHT). Asp-12 functions as the Proton acceptor in the catalytic mechanism. Residues Asp-12 and Gly-39 each coordinate Mg(2+). IMP-binding positions include 12–15 (DEGK), 37–40 (NAGH), Thr-130, Arg-144, Asn-226, Thr-241, and Arg-305. His-40 functions as the Proton donor in the catalytic mechanism. A substrate-binding site is contributed by 301-307 (VTTGRKR). Residues Arg-307, 333-335 (KLD), and 415-417 (GTG) each bind GTP.

Belongs to the adenylosuccinate synthetase family. In terms of assembly, homodimer. Mg(2+) is required as a cofactor.

The protein resides in the cytoplasm. The catalysed reaction is IMP + L-aspartate + GTP = N(6)-(1,2-dicarboxyethyl)-AMP + GDP + phosphate + 2 H(+). The protein operates within purine metabolism; AMP biosynthesis via de novo pathway; AMP from IMP: step 1/2. Plays an important role in the de novo pathway and in the salvage pathway of purine nucleotide biosynthesis. Catalyzes the first committed step in the biosynthesis of AMP from IMP. The chain is Adenylosuccinate synthetase from Candida dubliniensis (strain CD36 / ATCC MYA-646 / CBS 7987 / NCPF 3949 / NRRL Y-17841) (Yeast).